The chain runs to 63 residues: Large ribosomal subunit protein uL29 (63 aa).

Belongs to the universal ribosomal protein uL29 family.

The protein is Large ribosomal subunit protein uL29 of Enterobacter sp. (strain 638).